The following is a 126-amino-acid chain: Fluoride-specific ion channel FluC (126 aa).

4 helical membrane passes run 6 to 26 (FVAV…FAVL), 36 to 56 (YGTL…VGFF), 69 to 89 (LAIT…SEVV), and 99 to 119 (WAGL…AFGL). Na(+) is bound by residues G76 and T79.

Belongs to the fluoride channel Fluc/FEX (TC 1.A.43) family.

The protein localises to the cell inner membrane. It carries out the reaction fluoride(in) = fluoride(out). With respect to regulation, na(+) is not transported, but it plays an essential structural role and its presence is essential for fluoride channel function. Its function is as follows. Fluoride-specific ion channel. Important for reducing fluoride concentration in the cell, thus reducing its toxicity. The sequence is that of Fluoride-specific ion channel FluC from Cupriavidus necator (strain ATCC 17699 / DSM 428 / KCTC 22496 / NCIMB 10442 / H16 / Stanier 337) (Ralstonia eutropha).